We begin with the raw amino-acid sequence, 59 residues long: Putative conotoxin (59 aa).

Residues 1–25 (MGMRMMFTVFLLVVLATTVVPITLA) form the signal peptide. Positions 26 to 47 (SATDGRNAAANARVSPVISKSS) are excised as a propeptide.

Belongs to the conotoxin A superfamily. Expressed by the venom duct.

It localises to the secreted. Acts as a neurotoxin. This Conus imperialis (Imperial cone) protein is Putative conotoxin.